Here is a 264-residue protein sequence, read N- to C-terminus: COP9 signalosome complex subunit 7b (264 aa).

Position 2 is an N-acetylalanine (alanine 2). The PCI domain maps to 2-159 (AGEQKPSSNL…QLLEVDFCIG (158 aa)). A coiled-coil region spans residues 194-237 (RANQYKENHSRTQQQVEAEVTNIKKTLKATASSSAQEMEQQLAE). Residues 223 to 232 (TASSSAQEME) are compositionally biased toward polar residues. Residues 223-264 (TASSSAQEMEQQLAERECPPHAEQRQPTKKMSKVKGLVSSRH) form a disordered region. Basic and acidic residues predominate over residues 235–248 (LAERECPPHAEQRQ).

It belongs to the CSN7/EIF3M family. CSN7 subfamily. As to quaternary structure, component of the CSN complex, composed of COPS1/GPS1, COPS2, COPS3, COPS4, COPS5, COPS6, COPS7 (COPS7A or COPS7B), COPS8 and COPS9. In the complex, it probably interacts directly with COPS1, COPS2, COPS4, COPS5, COPS6 and COPS8. Interacts with EIF3S6.

The protein resides in the cytoplasm. It localises to the nucleus. Component of the COP9 signalosome complex (CSN), a complex involved in various cellular and developmental processes. The CSN complex is an essential regulator of the ubiquitin (Ubl) conjugation pathway by mediating the deneddylation of the cullin subunits of SCF-type E3 ligase complexes, leading to decrease the Ubl ligase activity of SCF-type complexes such as SCF, CSA or DDB2. The complex is also involved in phosphorylation of p53/TP53, JUN, I-kappa-B-alpha/NFKBIA, ITPK1 and IRF8/ICSBP, possibly via its association with CK2 and PKD kinases. CSN-dependent phosphorylation of TP53 and JUN promotes and protects degradation by the Ubl system, respectively. This Bos taurus (Bovine) protein is COP9 signalosome complex subunit 7b (COPS7B).